The following is a 77-amino-acid chain: Translation initiation factor IF-1, chloroplastic (77 aa).

The S1-like domain maps to 1 to 71; it reads MKEQKWIHEG…TRGRIIYRLR (71 aa).

This sequence belongs to the IF-1 family. As to quaternary structure, component of the 30S ribosomal translation pre-initiation complex which assembles on the 30S ribosome in the order IF-2 and IF-3, IF-1 and N-formylmethionyl-tRNA(fMet); mRNA recruitment can occur at any time during PIC assembly.

It is found in the plastid. It localises to the chloroplast. One of the essential components for the initiation of protein synthesis. Stabilizes the binding of IF-2 and IF-3 on the 30S subunit to which N-formylmethionyl-tRNA(fMet) subsequently binds. Helps modulate mRNA selection, yielding the 30S pre-initiation complex (PIC). Upon addition of the 50S ribosomal subunit IF-1, IF-2 and IF-3 are released leaving the mature 70S translation initiation complex. In Montinia caryophyllacea (Wild clove bush), this protein is Translation initiation factor IF-1, chloroplastic.